We begin with the raw amino-acid sequence, 310 residues long: DNA repair nuclease APEX1 (310 aa).

Residues 1–51 (MPKRAKKNEEGVDGEADNGTAAAKKEKKGKEPEAPILYEDPPEKLTSKDGR) form a disordered region. A compositionally biased stretch (basic and acidic residues) spans 41–51 (PPEKLTSKDGR). Aspartate 63 and glutamate 89 together coordinate Mg(2+). Residue tyrosine 164 is part of the active site. Mg(2+) contacts are provided by aspartate 203, asparagine 205, and aspartate 300. Catalysis depends on aspartate 203, which acts as the Proton donor/acceptor.

The protein belongs to the DNA repair enzymes AP/ExoA family. Mg(2+) serves as cofactor. It depends on Mn(2+) as a cofactor.

The protein localises to the nucleus. It is found in the nucleolus. Its subcellular location is the nucleus speckle. The protein resides in the endoplasmic reticulum. It localises to the cytoplasm. The protein localises to the mitochondrion. It catalyses the reaction Exonucleolytic cleavage in the 3'- to 5'-direction to yield nucleoside 5'-phosphates.. Functionally, functions as an apurinic/apyrimidinic (AP) endodeoxyribonuclease in the DNA base excision repair (BER) pathway of DNA lesions induced by oxidative and alkylating agents. Initiates repair of AP sites in DNA by catalyzing hydrolytic incision of the phosphodiester backbone immediately adjacent to the damage, generating a single-strand break with 5'-deoxyribose phosphate and 3'-hydroxyl ends. Has 3'-5' exoribonuclease activity on mismatched deoxyribonucleotides at the 3' termini of nicked or gapped DNA molecules during short-patch BER. May also play a role in the epigenetic regulation of gene expression by participating in DNA demethylation. Required for passage through the mid-blastula transition MBT. May also act as an endoribonuclease involved in the control of single-stranded RNA metabolism. Has no redox activity. Binds DNA and RNA. The protein is DNA repair nuclease APEX1 (apex1) of Danio rerio (Zebrafish).